Reading from the N-terminus, the 755-residue chain is Ribosome biogenesis protein BOP1 (755 aa).

2 stretches are compositionally biased toward polar residues: residues 1 to 10 and 43 to 61; these read MSQEPSSSFS and ELSSSSDNGDQGQPLTEPN. The disordered stretch occupies residues 1–65; the sequence is MSQEPSSSFS…PLTEPNNIPI (65 aa). The interaction with EB1 stretch occupies residues 309–754; sequence MDSMLPTLPN…SGTDGVLRLF (446 aa). The stretch at 335–374 is one WD 1 repeat; the sequence is TGTRRINGLTFSPKGMFFAVGGRDCILRVFETYSGRQVRA. The disordered stretch occupies residues 482–505; sequence YNEGSEDDDAAESARFNEERHQRG. The segment covering 496 to 505 has biased composition (basic and acidic residues); sequence RFNEERHQRG. 3 WD repeats span residues 617–655, 659–698, and 725–755; these read PGVKQVTASGMGYGDNFITGSADSQCALFANAAGPEPTA, YHTSTIRNIDVHPCGGLVATCSDDGIVQISRIVDASLVKM, and DGSVGISRVTWHPRQPWLLCSGTDGVLRLFK.

It belongs to the WD repeat BOP1/ERB1 family. As to quaternary structure, interacts (via C-terminal WD repeats) with giardin subunit beta. Interacts (via C-terminal WD repeats) with EB1.

It is found in the nucleus. The protein resides in the nucleolus. The protein localises to the nucleus membrane. In terms of biological role, required for maturation of ribosomal RNAs and formation of the large ribosomal subunit. The sequence is that of Ribosome biogenesis protein BOP1 from Giardia intestinalis (Giardia lamblia).